Consider the following 569-residue polypeptide: Anti-Muellerian hormone type-2 receptor (569 aa).

A signal peptide spans 1 to 17 (MLGTLGLWALLPAAVQA). Topologically, residues 18–148 (PPNRRTCVFF…AAPGESPWMA (131 aa)) are extracellular. 2 disulfides stabilise this stretch: cysteine 55–cysteine 79 and cysteine 92–cysteine 109. A glycan (N-linked (GlcNAc...) asparagine) is linked at asparagine 66. N-linked (GlcNAc...) asparagine glycosylation is present at asparagine 119. The chain crosses the membrane as a helical span at residues 149 to 169 (LALLGLVLLLLLLLGGIVVAL). Residues 170-569 (LQRKAYRVQS…PGAACASSDV (400 aa)) are Cytoplasmic-facing. Residues 201-511 (LCFSQVIREG…RLVALVHPQE (311 aa)) enclose the Protein kinase domain. ATP contacts are provided by residues 207-215 (IREGGHAAV) and lysine 228. Aspartate 331 (proton acceptor) is an active-site residue. The tract at residues 512–535 (AQPCPEGRPHSHPEDWPPAPAPAP) is disordered.

This sequence belongs to the protein kinase superfamily. TKL Ser/Thr protein kinase family. TGFB receptor subfamily. As to quaternary structure, interacts with type I receptor ACVR1. Requires Mg(2+) as cofactor. The cofactor is Mn(2+).

It localises to the membrane. The catalysed reaction is L-threonyl-[receptor-protein] + ATP = O-phospho-L-threonyl-[receptor-protein] + ADP + H(+). It catalyses the reaction L-seryl-[receptor-protein] + ATP = O-phospho-L-seryl-[receptor-protein] + ADP + H(+). Functionally, on ligand binding, forms a receptor complex consisting of two type II and two type I transmembrane serine/threonine kinases. Type II receptors phosphorylate and activate type I receptors which autophosphorylate, then bind and activate SMAD transcriptional regulators. Receptor for anti-Muellerian hormone. This chain is Anti-Muellerian hormone type-2 receptor (AMHR2), found in Oryctolagus cuniculus (Rabbit).